The following is a 1433-amino-acid chain: MANNNSDRQGLEPRVIRTLGSQALSGPSISNRTSSSEANPHFSKNVKEAMIKTASPTPLSTPIYRIAQACDRCRSKKTRCDGKRPQCSQCAAVGFECRISDKLLRKAYPKGYTESLEERVRELEAENKRLLALCDIKEQQISLVSQSRPQTSTDNTINGNFKHDLKDAPLNLSSTNIYLLNQTVNKQLQNGKMDGDNSGSAMSPLGAPPPPPHKDHLCDGVSCTNHLHVKPTSTSLNDPTAISFEQDEAPGLPAVKALKSMTTHQRSTQLATLVSLSIPRSTEEILFIPQLLTRIRQIFGFNSKQCLYTVSLLSSLKNRLPAPRLLAPSTSTKLKEKDEDKKLDDDSAFVKRFQSTNLSEFVDLKKFLISLKFNINSFSKQSEKPANDQDDELLSLTEIKELLHLFFKFWSNQVPILNNDHFLIYFNNFVEVVKHLSTENLETNNTTKSTVTTNHEIFALKLLMMLQMGLLVKIKMEKIKYTVPKNPKAKYARLMAYYHQLSLIIPKNPYFLNMSTTSLPSLQLLSLASFYYLNVGDISAIYGVRGRIVSMAQQLRLHRCPSAVLSVHSNPVLQKFEQSERRLLFWAIYYVDVFASLQLGVPRLLKDFDIECALPISDVEYKDQLSMENEKADKKAKKIQLQGQVSSFSLQIIRFAKILGNILDSIFKRGMMDERITSEVALVHENALDNWRNQLPEMYYFQITVNGTVNLDEIRATNQRNTETKFDKKDIILFEKKILLLFYFLAKSMIHLPVIATKPLPKNVDNATKKKQSMFNNDSKGATNQDHMILDVDMTSPAIRTSSSYIILQQATNATLTIFQAINSMYLPLPLNVSRTLIRFSLLCARGSLEYTKGGALFLDNKNLLLDTIKDIENDRLLDLPGIASWHTLKLFDMSINLLLKAPNVKVERLDKFLEKKLNYYNRLMGLPPATTTSLKPLFGSQSKNSLENRQRTPNVKRENPEHEYLYGNDSNNNNNSEAGHSPMTNTTNGNKRLKYEKDAKRNAKDGGISKGENAHNFQNDTKKNMSTSNLFPFSFSNTDLTALFTHPEGPNCTNTNNGNVDVCNRASTDATDANIENLSFLNMAPFLQTGNSNIGQNTIENKPMHMDAIFSLPSNLDLMKDNMDSKPEQLEPVIKQNPENSKNNQFHQKGKSTNMEKNNLSFNNKSNYSLTKLMRLLNNDNSFSNISINNFLYQNDQNSASADPGTNKKAVTNAGANFKPPSTGSNTSQGSILGSTKHGMDNCDFNDLGNFNNFMTNVNYSGVDYDYIVDASLGLAPLLVDTPDISNTNTTSTTSNRSKNSIILDTTFNDDLDRSRMNAREVLNPTDSILSQGMVSSVSTRNTSNQRSLSSGNDSKGDSSSQENSKSATGNQLDTPSTLFQMRRTSSGPSASHRGPRRPQKNRYNTDRSKSSGGGSSNTDNVSDLFQWQNAK.

Polar residues predominate over residues 20-38 (GSQALSGPSISNRTSSSEA). The tract at residues 20 to 40 (GSQALSGPSISNRTSSSEANP) is disordered. The segment at residues 70–97 (CDRCRSKKTRCDGKRPQCSQCAAVGFEC) is a DNA-binding region (zn(2)-C6 fungal-type). Positions 936–946 (KPLFGSQSKNS) are enriched in polar residues. 4 disordered regions span residues 936–1024 (KPLF…DTKK), 1137–1162 (QNPE…NNLS), 1200–1236 (SASA…ILGS), and 1324–1433 (LNPT…QNAK). 2 stretches are compositionally biased toward basic and acidic residues: residues 947–965 (LENR…EHEY) and 994–1005 (LKYEKDAKRNAK). Polar residues-rich tracts occupy residues 1138–1162 (NPEN…NNLS), 1221–1235 (PPST…SILG), and 1326–1348 (PTDS…SNQR). Residues 1349–1362 (SLSSGNDSKGDSSS) show a composition bias toward low complexity. 2 stretches are compositionally biased toward polar residues: residues 1363-1391 (QENS…SGPS) and 1418-1433 (SNTD…QNAK).

In terms of processing, could be the target of the SNF1/CAT1 - SNF4/CAT3 kinase complex.

The protein localises to the nucleus. Its function is as follows. Activator of the gluconeogenic enzymes FBP1 and PCK1 genes. The polypeptide is Regulatory protein CAT8 (CAT8) (Saccharomyces cerevisiae (strain ATCC 204508 / S288c) (Baker's yeast)).